Consider the following 684-residue polypeptide: Translation factor GUF1 homolog, mitochondrial (684 aa).

The tr-type G domain occupies 82–270 (HLIRNFSIIA…AVIERIPQPK (189 aa)). GTP contacts are provided by residues 91-98 (AHVDHGKS), 163-167 (DTPGH), and 217-220 (NKID).

The protein belongs to the TRAFAC class translation factor GTPase superfamily. Classic translation factor GTPase family. LepA subfamily.

It is found in the mitochondrion inner membrane. It carries out the reaction GTP + H2O = GDP + phosphate + H(+). Its function is as follows. Promotes mitochondrial protein synthesis. May act as a fidelity factor of the translation reaction, by catalyzing a one-codon backward translocation of tRNAs on improperly translocated ribosomes. Binds to mitochondrial ribosomes in a GTP-dependent manner. This chain is Translation factor GUF1 homolog, mitochondrial, found in Physcomitrium patens (Spreading-leaved earth moss).